Consider the following 861-residue polypeptide: uncharacterized protein (861 aa).

12 helical membrane-spanning segments follow: residues 4 to 24 (KHIM…AFFV), 75 to 95 (LGYY…VWLL), 106 to 126 (TLFW…LIIF), 159 to 179 (EAYW…VLGA), 199 to 219 (LINN…YVLF), 238 to 258 (LFLV…VPVV), 282 to 302 (ILFS…LFII), 313 to 333 (FAGL…ASVF), 343 to 363 (FEYV…SQLS), 370 to 385 (LLPA…LYHI), 396 to 416 (ANES…AAAF), and 425 to 445 (VYGI…KYAL). A coiled-coil region spans residues 738-766 (ELRNIALYEENYQTLKNAVMQNKTEKADK). Residues 833–853 (PYFKISAIISLVSLLLAVFYI) traverse the membrane as a helical segment.

The protein localises to the cell membrane. This is an uncharacterized protein from Bacillus subtilis (strain 168).